Consider the following 381-residue polypeptide: Arf-GAP with dual PH domain-containing protein 2 (381 aa).

The Arf-GAP domain maps to 9–131 (KRLLELLRAP…FMADGETISL (123 aa)). Residues 25 to 48 (CADCGAADPDWASYKLGIFICLNC) form a C4-type zinc finger. PH domains follow at residues 132-233 (PGNR…AARL) and 255-361 (NYLK…GVLS).

In terms of tissue distribution, highly expressed in placenta, spleen, kidney, skeletal muscle and adrenal gland. Weakly expressed in thyroid, liver, heart, lung, small intestine, peripheral blood leukocytes. Not detected in spinal cord, brain, stomach, trachea, colon, lymph node and bone marrow.

It is found in the cytoplasm. Its subcellular location is the cell membrane. Functionally, GTPase-activating protein for the ADP ribosylation factor family (Potential). Binds phosphatidylinositol 3,4,5-trisphosphate (PtdInsP3) and inositol 1,3,4,5-tetrakisphosphate (InsP4). Possesses a stoichiometry of two binding sites for InsP4 with identical affinity. The protein is Arf-GAP with dual PH domain-containing protein 2 (ADAP2) of Homo sapiens (Human).